Consider the following 416-residue polypeptide: Glutamyl-tRNA reductase (416 aa).

Substrate-binding positions include 49–52 (TCNR), Ser-105, 110–112 (EPQ), and Gln-116. The active-site Nucleophile is the Cys-50. 185–190 (GAGETI) is a binding site for NADP(+).

The protein belongs to the glutamyl-tRNA reductase family. Homodimer.

It carries out the reaction (S)-4-amino-5-oxopentanoate + tRNA(Glu) + NADP(+) = L-glutamyl-tRNA(Glu) + NADPH + H(+). It participates in porphyrin-containing compound metabolism; protoporphyrin-IX biosynthesis; 5-aminolevulinate from L-glutamyl-tRNA(Glu): step 1/2. Catalyzes the NADPH-dependent reduction of glutamyl-tRNA(Glu) to glutamate 1-semialdehyde (GSA). In Shewanella baltica (strain OS223), this protein is Glutamyl-tRNA reductase.